A 310-amino-acid polypeptide reads, in one-letter code: UDP-N-acetylenolpyruvoylglucosamine reductase (310 aa).

An FAD-binding PCMH-type domain is found at 31–216 (KIGGPADYFV…LRKIEELNQA (186 aa)). Arg-180 is a catalytic residue. Ser-230 functions as the Proton donor in the catalytic mechanism. Residue Glu-300 is part of the active site.

It belongs to the MurB family. It depends on FAD as a cofactor.

It is found in the cytoplasm. The catalysed reaction is UDP-N-acetyl-alpha-D-muramate + NADP(+) = UDP-N-acetyl-3-O-(1-carboxyvinyl)-alpha-D-glucosamine + NADPH + H(+). It participates in cell wall biogenesis; peptidoglycan biosynthesis. Cell wall formation. The protein is UDP-N-acetylenolpyruvoylglucosamine reductase of Lachnoclostridium phytofermentans (strain ATCC 700394 / DSM 18823 / ISDg) (Clostridium phytofermentans).